Here is a 460-residue protein sequence, read N- to C-terminus: V-type ATP synthase beta chain (460 aa).

It belongs to the ATPase alpha/beta chains family.

In terms of biological role, produces ATP from ADP in the presence of a proton gradient across the membrane. The V-type beta chain is a regulatory subunit. The polypeptide is V-type ATP synthase beta chain (Dictyoglomus turgidum (strain DSM 6724 / Z-1310)).